Here is a 592-residue protein sequence, read N- to C-terminus: 1,4-alpha-glucan branching enzyme GlgB 2 (592 aa).

Asp274 functions as the Nucleophile in the catalytic mechanism. Glu327 (proton donor) is an active-site residue.

The protein belongs to the glycosyl hydrolase 13 family. GlgB subfamily. Monomer.

It carries out the reaction Transfers a segment of a (1-&gt;4)-alpha-D-glucan chain to a primary hydroxy group in a similar glucan chain.. It participates in glycan biosynthesis; glycogen biosynthesis. Functionally, catalyzes the formation of the alpha-1,6-glucosidic linkages in glycogen by scission of a 1,4-alpha-linked oligosaccharide from growing alpha-1,4-glucan chains and the subsequent attachment of the oligosaccharide to the alpha-1,6 position. The sequence is that of 1,4-alpha-glucan branching enzyme GlgB 2 from Streptomyces avermitilis (strain ATCC 31267 / DSM 46492 / JCM 5070 / NBRC 14893 / NCIMB 12804 / NRRL 8165 / MA-4680).